Consider the following 217-residue polypeptide: Large ribosomal subunit protein uL3 (217 aa).

Gln154 is subject to N5-methylglutamine.

Belongs to the universal ribosomal protein uL3 family. Part of the 50S ribosomal subunit. Forms a cluster with proteins L14 and L19. Post-translationally, methylated by PrmB.

Functionally, one of the primary rRNA binding proteins, it binds directly near the 3'-end of the 23S rRNA, where it nucleates assembly of the 50S subunit. This is Large ribosomal subunit protein uL3 from Burkholderia ambifaria (strain ATCC BAA-244 / DSM 16087 / CCUG 44356 / LMG 19182 / AMMD) (Burkholderia cepacia (strain AMMD)).